Consider the following 240-residue polypeptide: Adenosine 5'-phosphosulfate reductase (240 aa).

[4Fe-4S] cluster is bound by residues Cys125, Cys126, Cys208, and Cys211. The active-site Nucleophile; cysteine thiosulfonate intermediate is the Cys234.

It belongs to the PAPS reductase family. CysH subfamily. [4Fe-4S] cluster is required as a cofactor.

The protein resides in the cytoplasm. The catalysed reaction is [thioredoxin]-disulfide + sulfite + AMP + 2 H(+) = adenosine 5'-phosphosulfate + [thioredoxin]-dithiol. The protein operates within sulfur metabolism; hydrogen sulfide biosynthesis; sulfite from sulfate. Catalyzes the formation of sulfite from adenosine 5'-phosphosulfate (APS) using thioredoxin as an electron donor. The sequence is that of Adenosine 5'-phosphosulfate reductase from Oceanobacillus iheyensis (strain DSM 14371 / CIP 107618 / JCM 11309 / KCTC 3954 / HTE831).